A 68-amino-acid chain; its full sequence is Large ribosomal subunit protein uL30 (68 aa).

The protein belongs to the universal ribosomal protein uL30 family. As to quaternary structure, part of the 50S ribosomal subunit.

The protein is Large ribosomal subunit protein uL30 of Bartonella tribocorum (strain CIP 105476 / IBS 506).